We begin with the raw amino-acid sequence, 326 residues long: Glutaminase 2 (326 aa).

Substrate is bound by residues serine 73, asparagine 125, glutamate 169, asparagine 176, tyrosine 200, tyrosine 252, and valine 270.

It belongs to the glutaminase family. As to quaternary structure, homotetramer.

It catalyses the reaction L-glutamine + H2O = L-glutamate + NH4(+). This Bacillus cereus (strain ATCC 14579 / DSM 31 / CCUG 7414 / JCM 2152 / NBRC 15305 / NCIMB 9373 / NCTC 2599 / NRRL B-3711) protein is Glutaminase 2.